The primary structure comprises 331 residues: MARMYYDEDANLDLLAGKTIAIIGYGSQGHAHALNLKDSGLNVIVGLYPGSKSVAKAEAAGLTVKSVADAANAADFIMILLPDEVQKTIYKNEIEPNLEEGNVLAFAHGFNIHFGQVVPPANVDVVMVAPKGPGHLVRRTYEGGEGVPALFAVYQDASGQARDRAMSYAKGIGGTRAGVLETTFREETETDLFGEQAVLCGGLSALIKAGFETLVEAGYQPELAYFECLHEVKLIVDLVVEGGLAKMRDSISNTAEYGDYTRGPRIVTQQTKAEMQKILSEIQSGQFAREFVLENQSGKPGFTAMRRKESEHKIEEVGKDLRAMFSWLKKA.

In terms of domain architecture, KARI N-terminal Rossmann spans 2–182 (ARMYYDEDAN…GGTRAGVLET (181 aa)). Residues 25 to 28 (YGSQ), Ser-51, Ser-53, and 83 to 86 (DEVQ) each bind NADP(+). Residue His-108 is part of the active site. Gly-134 serves as a coordination point for NADP(+). In terms of domain architecture, KARI C-terminal knotted spans 183–328 (TFREETETDL…KDLRAMFSWL (146 aa)). Residues Asp-191, Glu-195, Glu-227, and Glu-231 each coordinate Mg(2+). Residue Ser-252 participates in substrate binding.

This sequence belongs to the ketol-acid reductoisomerase family. Requires Mg(2+) as cofactor.

The catalysed reaction is (2R)-2,3-dihydroxy-3-methylbutanoate + NADP(+) = (2S)-2-acetolactate + NADPH + H(+). It carries out the reaction (2R,3R)-2,3-dihydroxy-3-methylpentanoate + NADP(+) = (S)-2-ethyl-2-hydroxy-3-oxobutanoate + NADPH + H(+). Its pathway is amino-acid biosynthesis; L-isoleucine biosynthesis; L-isoleucine from 2-oxobutanoate: step 2/4. It functions in the pathway amino-acid biosynthesis; L-valine biosynthesis; L-valine from pyruvate: step 2/4. Involved in the biosynthesis of branched-chain amino acids (BCAA). Catalyzes an alkyl-migration followed by a ketol-acid reduction of (S)-2-acetolactate (S2AL) to yield (R)-2,3-dihydroxy-isovalerate. In the isomerase reaction, S2AL is rearranged via a Mg-dependent methyl migration to produce 3-hydroxy-3-methyl-2-ketobutyrate (HMKB). In the reductase reaction, this 2-ketoacid undergoes a metal-dependent reduction by NADPH to yield (R)-2,3-dihydroxy-isovalerate. The protein is Ketol-acid reductoisomerase (NADP(+)) of Nostoc punctiforme (strain ATCC 29133 / PCC 73102).